A 172-amino-acid polypeptide reads, in one-letter code: Ribosome maturation factor RimM (172 aa).

In terms of domain architecture, PRC barrel spans 99-171 (DDIPTWNYFI…LLTVEVPDGL (73 aa)).

This sequence belongs to the RimM family. As to quaternary structure, binds ribosomal protein uS19.

The protein resides in the cytoplasm. Its function is as follows. An accessory protein needed during the final step in the assembly of 30S ribosomal subunit, possibly for assembly of the head region. Essential for efficient processing of 16S rRNA. May be needed both before and after RbfA during the maturation of 16S rRNA. It has affinity for free ribosomal 30S subunits but not for 70S ribosomes. The polypeptide is Ribosome maturation factor RimM (Phocaeicola vulgatus (strain ATCC 8482 / DSM 1447 / JCM 5826 / CCUG 4940 / NBRC 14291 / NCTC 11154) (Bacteroides vulgatus)).